Here is a 726-residue protein sequence, read N- to C-terminus: Disintegrin and metalloproteinase domain-containing protein 20 (726 aa).

The first 31 residues, 1-31 (MAVGEPLVHIRVTLLLLWFGMFLSISGHSQA), serve as a signal peptide directing secretion. Positions 32–206 (RPSQYFTSPE…SSFVGWWTHQ (175 aa)) are excised as a propeptide. A Cysteine switch motif is present at residues 171–178 (MRCGLTEE). Cys173 is a binding site for Zn(2+). 2 N-linked (GlcNAc...) asparagine glycosylation sites follow: Asn191 and Asn226. Residues 207–400 (RFVELVVVVD…SGLCIQPPPY (194 aa)) enclose the Peptidase M12B domain. The Extracellular portion of the chain corresponds to 207-693 (RFVELVVVVD…GLNVMGKLRY (487 aa)). 3 disulfide bridges follow: Cys317–Cys394, Cys357–Cys379, and Cys359–Cys364. Zn(2+) is bound at residue His342. Glu343 is an active-site residue. Residues His346 and His352 each coordinate Zn(2+). N-linked (GlcNAc...) asparagine glycans are attached at residues Asn378, Asn438, Asn479, and Asn587. A Disintegrin domain is found at 407 to 493 (LKYCGNLVVE…QCPDDVYVQD (87 aa)). A disulfide bridge connects residues Cys465 and Cys485. 3 cysteine pairs are disulfide-bonded: Cys635–Cys646, Cys640–Cys652, and Cys654–Cys663. Residues 635–663 (CQPKTCNMRGICNNKQHCHCNHEWAPPYC) form the EGF-like domain. The helical transmembrane segment at 694-714 (LSLLCLLPLVAFLLFCLHVLF) threads the bilayer. Over 715–726 (KKRTKSKEDEEG) the chain is Cytoplasmic.

Zn(2+) is required as a cofactor. In terms of processing, has no obvious cleavage site for furin endopeptidase, suggesting that the proteolytic processing is regulated. Testis specific.

The protein localises to the membrane. Its function is as follows. May be involved in sperm maturation and/or fertilization. The polypeptide is Disintegrin and metalloproteinase domain-containing protein 20 (ADAM20) (Homo sapiens (Human)).